Consider the following 150-residue polypeptide: MFDVLVYLYENYWRPDACPDHDQLSKKLSAVGFESEEIADALTWLDGLAGAAESHIGTQSELSLRVYSPSEQDHLGLASIAFISFLESAGVLPPAMREIAVDRAMALGGGPVALEDLKIIVLMVFWSLGEEPDALILDELFVDAEDRLIH.

It belongs to the Smg family.

The polypeptide is Protein Smg homolog (Leptothrix cholodnii (strain ATCC 51168 / LMG 8142 / SP-6) (Leptothrix discophora (strain SP-6))).